Reading from the N-terminus, the 127-residue chain is MSYRKLGWDSSQRKAMLREMTTQLIINERIVTTEARAKEVRRTAEKMITLGKRGDLAARRKAAAFVRNEIADIHEEGDEVVVKSALQKLFSDVAPRYKDRNGGYTRIMKLAVPRKGDAAPMVVLELV.

The protein belongs to the bacterial ribosomal protein bL17 family. In terms of assembly, part of the 50S ribosomal subunit. Contacts protein L32.

In Lactobacillus delbrueckii subsp. bulgaricus (strain ATCC 11842 / DSM 20081 / BCRC 10696 / JCM 1002 / NBRC 13953 / NCIMB 11778 / NCTC 12712 / WDCM 00102 / Lb 14), this protein is Large ribosomal subunit protein bL17.